The primary structure comprises 312 residues: Serine/threonine-protein kinase ppk11 (312 aa).

One can recognise a Protein kinase domain in the interval 6–258 (YRDLQLIGQG…AEYLSKHKFI (253 aa)). ATP contacts are provided by residues 12–20 (IGQGSFGSV) and lysine 35. Aspartate 127 functions as the Proton acceptor in the catalytic mechanism.

It belongs to the protein kinase superfamily. Ser/Thr protein kinase family.

It is found in the cytoplasm. It localises to the nucleus. The enzyme catalyses L-seryl-[protein] + ATP = O-phospho-L-seryl-[protein] + ADP + H(+). It catalyses the reaction L-threonyl-[protein] + ATP = O-phospho-L-threonyl-[protein] + ADP + H(+). In Schizosaccharomyces pombe (strain 972 / ATCC 24843) (Fission yeast), this protein is Serine/threonine-protein kinase ppk11 (ppk11).